The sequence spans 266 residues: N-acetyltransferase ECO1 (266 aa).

The segment at Lys31–His55 adopts a CCHH-type zinc-finger fold. Positions Thr108 to Ile266 constitute an N-acetyltransferase domain.

The protein belongs to the acetyltransferase family. ECO subfamily.

It is found in the nucleus. Functionally, probable acetyltransferase required for the establishment of sister chromatid cohesion and couple the processes of cohesion and DNA replication to ensure that only sister chromatids become paired together. In contrast to the structural cohesins, the deposition and establishment factors are required only during S phase. Acts by acetylating the cohesin complex component SMC3. In Eremothecium gossypii (strain ATCC 10895 / CBS 109.51 / FGSC 9923 / NRRL Y-1056) (Yeast), this protein is N-acetyltransferase ECO1 (ECO1).